The following is a 94-amino-acid chain: Selenoprotein K (94 aa).

Residues 20–42 (LSLITDFFWGIAEFVVLFFKTLL) traverse the membrane as a helical segment. Residues 48–94 (KRRSYGNSSDSRYDDGRGPPGNPPRRMGRINHLRGPSPPPMAGGUGR) are disordered. U92 is a non-standard amino acid (selenocysteine).

It belongs to the selenoprotein K family. In terms of assembly, interacts with DERL1, DERL2, DERL3 and SELENOS. The SELENOK-SELENOS complex interacts with VCP. Interacts with ZDHHC6. Cleaved by CAPN2/m-calpain in resting macrophages but not in activated macrophages. Macrophage activation up-regulates expression of the calpain inhibitor CAST/calpastatin, resulting in inhibition of CAPN2 activity. In terms of processing, truncated SELENOK proteins produced by failed UGA/Sec decoding are ubiquitinated by the CRL2(KLHDC2) complex, which recognizes the diglycine (Gly-Gly) at the C-terminus of truncated SELENOK proteins. As to expression, highly expressed in heart.

The protein localises to the endoplasmic reticulum membrane. Its subcellular location is the cell membrane. Functionally, required for Ca(2+) flux in immune cells and plays a role in T-cell proliferation and in T-cell and neutrophil migration. Involved in endoplasmic reticulum-associated degradation (ERAD) of soluble glycosylated proteins. Required for palmitoylation and cell surface expression of CD36 and involved in macrophage uptake of low-density lipoprotein and in foam cell formation. Together with ZDHHC6, required for palmitoylation of ITPR1 in immune cells, leading to regulate ITPR1 stability and function. Plays a role in protection of cells from ER stress-induced apoptosis. Protects cells from oxidative stress when overexpressed in cardiomyocytes. In Homo sapiens (Human), this protein is Selenoprotein K.